Here is a 349-residue protein sequence, read N- to C-terminus: Core protein VP7 (349 aa).

A glycan (N-linked (GlcNAc...) asparagine; by host) is linked at Asn-45.

Belongs to the orbivirus VP7 family. As to quaternary structure, homotrimer.

The protein localises to the virion. In terms of biological role, major structural core protein; binds to structural protein VP3. Constitutes the surface of the AHSV core. The sequence is that of Core protein VP7 (Segment-7) from Camelus dromedarius (Dromedary).